Here is a 391-residue protein sequence, read N- to C-terminus: Processive diacylglycerol beta-glucosyltransferase (391 aa).

It belongs to the glycosyltransferase 28 family. UgtP subfamily.

Its subcellular location is the cell membrane. It catalyses the reaction a 1,2-diacyl-3-O-(beta-D-glucopyranosyl)-sn-glycerol + UDP-alpha-D-glucose = a 1,2-diacyl-3-O-(beta-D-Glc-(1-&gt;6)-beta-D-Glc)-sn-glycerol + UDP + H(+). The enzyme catalyses a 1,2-diacyl-sn-glycerol + UDP-alpha-D-glucose = a 1,2-diacyl-3-O-(beta-D-glucopyranosyl)-sn-glycerol + UDP + H(+). The protein operates within glycolipid metabolism; diglucosyl-diacylglycerol biosynthesis. Functionally, processive glucosyltransferase involved in the biosynthesis of both the bilayer- and non-bilayer-forming membrane glucolipids. Is able to successively transfer two glucosyl residues to diacylglycerol (DAG), thereby catalyzing the formation of beta-monoglucosyl-DAG (3-O-(beta-D-glucopyranosyl)-1,2-diacyl-sn-glycerol) and beta-diglucosyl-DAG (3-O-(beta-D-glucopyranosyl-beta-(1-&gt;6)-D-glucopyranosyl)-1,2-diacyl-sn-glycerol). Beta-diglucosyl-DAG is the predominant glycolipid found in Bacillales and is also used as a membrane anchor for lipoteichoic acid (LTA). The sequence is that of Processive diacylglycerol beta-glucosyltransferase from Staphylococcus saprophyticus subsp. saprophyticus (strain ATCC 15305 / DSM 20229 / NCIMB 8711 / NCTC 7292 / S-41).